Reading from the N-terminus, the 274-residue chain is uncharacterized protein (274 aa).

The segment at E235 to K274 is disordered. The segment covering Q241–K274 has biased composition (basic and acidic residues).

This is an uncharacterized protein from Treponema pallidum (strain Nichols).